The primary structure comprises 642 residues: Threonine--tRNA ligase (642 aa).

The region spanning 1 to 61 (MPVIRFCDGS…TEDSSISFIS (61 aa)) is the TGS domain. A catalytic region spans residues 243 to 534 (DHRKIGKLLN…LIEEFSGKLP (292 aa)). Zn(2+) contacts are provided by Cys334, His385, and His511.

It belongs to the class-II aminoacyl-tRNA synthetase family. Homodimer. Requires Zn(2+) as cofactor.

Its subcellular location is the cytoplasm. It catalyses the reaction tRNA(Thr) + L-threonine + ATP = L-threonyl-tRNA(Thr) + AMP + diphosphate + H(+). Functionally, catalyzes the attachment of threonine to tRNA(Thr) in a two-step reaction: L-threonine is first activated by ATP to form Thr-AMP and then transferred to the acceptor end of tRNA(Thr). Also edits incorrectly charged L-seryl-tRNA(Thr). The polypeptide is Threonine--tRNA ligase (Buchnera aphidicola subsp. Schizaphis graminum (strain Sg)).